The primary structure comprises 347 residues: UDP-3-O-acylglucosamine N-acyltransferase (347 aa).

The active-site Proton acceptor is His241.

This sequence belongs to the transferase hexapeptide repeat family. LpxD subfamily. Homotrimer.

It catalyses the reaction a UDP-3-O-[(3R)-3-hydroxyacyl]-alpha-D-glucosamine + a (3R)-hydroxyacyl-[ACP] = a UDP-2-N,3-O-bis[(3R)-3-hydroxyacyl]-alpha-D-glucosamine + holo-[ACP] + H(+). It participates in bacterial outer membrane biogenesis; LPS lipid A biosynthesis. Catalyzes the N-acylation of UDP-3-O-acylglucosamine using 3-hydroxyacyl-ACP as the acyl donor. Is involved in the biosynthesis of lipid A, a phosphorylated glycolipid that anchors the lipopolysaccharide to the outer membrane of the cell. This Neisseria gonorrhoeae (strain NCCP11945) protein is UDP-3-O-acylglucosamine N-acyltransferase.